An 869-amino-acid polypeptide reads, in one-letter code: Leucine--tRNA ligase (869 aa).

Residues 42–52 (PYPSGRLHMGH) carry the 'HIGH' region motif. Positions 620–624 (KMSKS) match the 'KMSKS' region motif. Position 623 (Lys-623) interacts with ATP.

Belongs to the class-I aminoacyl-tRNA synthetase family.

It is found in the cytoplasm. It carries out the reaction tRNA(Leu) + L-leucine + ATP = L-leucyl-tRNA(Leu) + AMP + diphosphate. In Hamiltonella defensa subsp. Acyrthosiphon pisum (strain 5AT), this protein is Leucine--tRNA ligase.